A 369-amino-acid polypeptide reads, in one-letter code: Isocitrate dehydrogenase [NAD] subunit 2, mitochondrial (369 aa).

A mitochondrion-targeting transit peptide spans 1–15; it reads MLRNTFFRNTSRRFL. Thr-105 carries the post-translational modification Phosphothreonine. Residues Arg-119, Arg-129, and Arg-150 each coordinate substrate. Thr-153 is subject to Phosphothreonine. A substrate-binding site is contributed by Asp-237. Positions 237, 263, and 267 each coordinate Mg(2+). Phosphothreonine occurs at positions 327 and 349.

Belongs to the isocitrate and isopropylmalate dehydrogenases family. Octamer of two non-identical subunits IDH1 and IDH2. Mg(2+) is required as a cofactor. Mn(2+) serves as cofactor.

It is found in the mitochondrion matrix. The catalysed reaction is D-threo-isocitrate + NAD(+) = 2-oxoglutarate + CO2 + NADH. Allosterically regulated by several compounds including AMP, NAD(+), and citrate. Performs an essential role in the oxidative function of the citric acid cycle. Also binds RNA; specifically to the 5'-untranslated leaders of mitochondrial mRNAs. This Saccharomyces cerevisiae (strain ATCC 204508 / S288c) (Baker's yeast) protein is Isocitrate dehydrogenase [NAD] subunit 2, mitochondrial (IDH2).